The primary structure comprises 215 residues: MNNTYPHPIIAREGWPYLGGIFIVTLIVQAAAGFGWAWPFWVLTLFVLQFFRDPARAVPTQANAILSPADGRIVAVEQVRDPYADRDSLKISVFMNVFNVHSNRAPVDGTVQQVQYFPGKFVNADLDKASLENERNAIVLRRADGQLVTSVQVAGLIARRILCYTKAGEVLTRGQRYGFIRFGSRVDVYLPLTARPRVTIGEKVSATLTVLAELD.

The Schiff-base intermediate with substrate; via pyruvic acid role is filled by serine 184. Serine 184 is modified (pyruvic acid (Ser); by autocatalysis).

The protein belongs to the phosphatidylserine decarboxylase family. PSD-A subfamily. Heterodimer of a large membrane-associated beta subunit and a small pyruvoyl-containing alpha subunit. Pyruvate is required as a cofactor. Is synthesized initially as an inactive proenzyme. Formation of the active enzyme involves a self-maturation process in which the active site pyruvoyl group is generated from an internal serine residue via an autocatalytic post-translational modification. Two non-identical subunits are generated from the proenzyme in this reaction, and the pyruvate is formed at the N-terminus of the alpha chain, which is derived from the carboxyl end of the proenzyme. The post-translation cleavage follows an unusual pathway, termed non-hydrolytic serinolysis, in which the side chain hydroxyl group of the serine supplies its oxygen atom to form the C-terminus of the beta chain, while the remainder of the serine residue undergoes an oxidative deamination to produce ammonia and the pyruvoyl prosthetic group on the alpha chain.

The protein resides in the cell membrane. The catalysed reaction is a 1,2-diacyl-sn-glycero-3-phospho-L-serine + H(+) = a 1,2-diacyl-sn-glycero-3-phosphoethanolamine + CO2. Its pathway is phospholipid metabolism; phosphatidylethanolamine biosynthesis; phosphatidylethanolamine from CDP-diacylglycerol: step 2/2. Functionally, catalyzes the formation of phosphatidylethanolamine (PtdEtn) from phosphatidylserine (PtdSer). This chain is Phosphatidylserine decarboxylase proenzyme, found in Ralstonia pickettii (strain 12J).